A 160-amino-acid polypeptide reads, in one-letter code: uncharacterized protein (160 aa).

The 143-residue stretch at 9–151 (LLINYKTLEK…GENPLIWLPE (143 aa)) folds into the N-acetyltransferase domain.

This is an uncharacterized protein from Oceanobacillus iheyensis (strain DSM 14371 / CIP 107618 / JCM 11309 / KCTC 3954 / HTE831).